A 183-amino-acid polypeptide reads, in one-letter code: uncharacterized protein (183 aa).

A signal peptide spans 1–23; sequence MSAFKKSLLVAGVAMILSNNVFA. Cysteine 41 and cysteine 80 are disulfide-bonded.

Belongs to the fimbrial protein family.

The protein resides in the fimbrium. This is an uncharacterized protein from Escherichia coli (strain K12).